The following is a 142-amino-acid chain: Movement protein (142 aa).

A disordered region spans residues 1 to 142; sequence MDLPEDQARF…LDRSESLSRY (142 aa). Composition is skewed to polar residues over residues 9-22 and 33-43; these read RFTNSYSLRTTSME and LYQSASRSQMA. The span at 50 to 62 shows a compositional bias: low complexity; that stretch reads SIISRTSSWRTSP. 2 stretches are compositionally biased toward polar residues: residues 74–95 and 113–124; these read MNSILTSRTQQSSPKLTNSASP and TTLQRTNSGFST. A compositionally biased stretch (basic and acidic residues) spans 125–142; that stretch reads KETEMPRLLDRSESLSRY.

This sequence belongs to the luteoviruses movement protein family.

In terms of biological role, transports viral genome to neighboring plant cells directly through plasmosdesmata, without any budding. The movement protein allows efficient cell to cell propagation, by bypassing the host cell wall barrier. The protein is Movement protein of Cicer arietinum (Chickpea).